A 508-amino-acid chain; its full sequence is Photosystem II CP47 reaction center protein (508 aa).

The next 6 helical transmembrane spans lie at 21 to 36 (SVHI…WAGS), 101 to 115 (IVFS…IWHW), 140 to 156 (GIHL…FGAF), 203 to 218 (IAAG…FHLS), 237 to 252 (VLSS…AFVV), and 457 to 472 (SFAL…HGAR).

This sequence belongs to the PsbB/PsbC family. PsbB subfamily. As to quaternary structure, PSII is composed of 1 copy each of membrane proteins PsbA, PsbB, PsbC, PsbD, PsbE, PsbF, PsbH, PsbI, PsbJ, PsbK, PsbL, PsbM, PsbT, PsbX, PsbY, PsbZ, Psb30/Ycf12, at least 3 peripheral proteins of the oxygen-evolving complex and a large number of cofactors. It forms dimeric complexes. Binds multiple chlorophylls. PSII binds additional chlorophylls, carotenoids and specific lipids. is required as a cofactor.

It is found in the plastid. Its subcellular location is the chloroplast thylakoid membrane. Functionally, one of the components of the core complex of photosystem II (PSII). It binds chlorophyll and helps catalyze the primary light-induced photochemical processes of PSII. PSII is a light-driven water:plastoquinone oxidoreductase, using light energy to abstract electrons from H(2)O, generating O(2) and a proton gradient subsequently used for ATP formation. The protein is Photosystem II CP47 reaction center protein of Illicium oligandrum (Star anise).